Consider the following 272-residue polypeptide: Formamidopyrimidine-DNA glycosylase (272 aa).

Catalysis depends on P2, which acts as the Schiff-base intermediate with DNA. The Proton donor role is filled by E3. K58 acts as the Proton donor; for beta-elimination activity in catalysis. Residues H91, R111, and R153 each contribute to the DNA site. An FPG-type zinc finger spans residues 238-272; it reads AVYGRANKACVICSKPLKEIRQAQRSTVFCINCQS. The active-site Proton donor; for delta-elimination activity is the R262.

Belongs to the FPG family. Monomer. It depends on Zn(2+) as a cofactor.

The enzyme catalyses Hydrolysis of DNA containing ring-opened 7-methylguanine residues, releasing 2,6-diamino-4-hydroxy-5-(N-methyl)formamidopyrimidine.. It carries out the reaction 2'-deoxyribonucleotide-(2'-deoxyribose 5'-phosphate)-2'-deoxyribonucleotide-DNA = a 3'-end 2'-deoxyribonucleotide-(2,3-dehydro-2,3-deoxyribose 5'-phosphate)-DNA + a 5'-end 5'-phospho-2'-deoxyribonucleoside-DNA + H(+). Involved in base excision repair of DNA damaged by oxidation or by mutagenic agents. Acts as a DNA glycosylase that recognizes and removes damaged bases. Has a preference for oxidized purines, such as 7,8-dihydro-8-oxoguanine (8-oxoG). Has AP (apurinic/apyrimidinic) lyase activity and introduces nicks in the DNA strand. Cleaves the DNA backbone by beta-delta elimination to generate a single-strand break at the site of the removed base with both 3'- and 5'-phosphates. The chain is Formamidopyrimidine-DNA glycosylase from Marinomonas sp. (strain MWYL1).